Here is a 525-residue protein sequence, read N- to C-terminus: GMP synthase [glutamine-hydrolyzing] (525 aa).

One can recognise a Glutamine amidotransferase type-1 domain in the interval 9–207; it reads RILILDFGSQ…VQDICGCEAL (199 aa). The active-site Nucleophile is the cysteine 86. Active-site residues include histidine 181 and glutamate 183. One can recognise a GMPS ATP-PPase domain in the interval 208–400; sequence WTPSNIVEDA…LGLPYDMVYR (193 aa). 235-241 is an ATP binding site; it reads SGGVDSS.

In terms of assembly, homodimer.

It catalyses the reaction XMP + L-glutamine + ATP + H2O = GMP + L-glutamate + AMP + diphosphate + 2 H(+). It participates in purine metabolism; GMP biosynthesis; GMP from XMP (L-Gln route): step 1/1. In terms of biological role, catalyzes the synthesis of GMP from XMP. The sequence is that of GMP synthase [glutamine-hydrolyzing] from Pseudomonas putida (strain W619).